A 383-amino-acid polypeptide reads, in one-letter code: Succinyl-diaminopimelate desuccinylase (383 aa).

Zn(2+) is bound at residue His70. Asp72 is a catalytic residue. Residue Asp103 participates in Zn(2+) binding. Glu137 functions as the Proton acceptor in the catalytic mechanism. The Zn(2+) site is built by Glu138, Glu166, and His352.

It belongs to the peptidase M20A family. DapE subfamily. As to quaternary structure, homodimer. Requires Zn(2+) as cofactor. It depends on Co(2+) as a cofactor.

The catalysed reaction is N-succinyl-(2S,6S)-2,6-diaminopimelate + H2O = (2S,6S)-2,6-diaminopimelate + succinate. The protein operates within amino-acid biosynthesis; L-lysine biosynthesis via DAP pathway; LL-2,6-diaminopimelate from (S)-tetrahydrodipicolinate (succinylase route): step 3/3. Its function is as follows. Catalyzes the hydrolysis of N-succinyl-L,L-diaminopimelic acid (SDAP), forming succinate and LL-2,6-diaminopimelate (DAP), an intermediate involved in the bacterial biosynthesis of lysine and meso-diaminopimelic acid, an essential component of bacterial cell walls. The chain is Succinyl-diaminopimelate desuccinylase from Hahella chejuensis (strain KCTC 2396).